The primary structure comprises 506 residues: ATP synthase subunit alpha, chloroplastic (506 aa).

Residue 170–177 (GDRQTGKT) participates in ATP binding.

Belongs to the ATPase alpha/beta chains family. As to quaternary structure, F-type ATPases have 2 components, CF(1) - the catalytic core - and CF(0) - the membrane proton channel. CF(1) has five subunits: alpha(3), beta(3), gamma(1), delta(1), epsilon(1). CF(0) has four main subunits: a, b, b' and c.

The protein localises to the plastid. Its subcellular location is the chloroplast thylakoid membrane. The enzyme catalyses ATP + H2O + 4 H(+)(in) = ADP + phosphate + 5 H(+)(out). In terms of biological role, produces ATP from ADP in the presence of a proton gradient across the membrane. The alpha chain is a regulatory subunit. The sequence is that of ATP synthase subunit alpha, chloroplastic from Euglena gracilis.